Here is a 443-residue protein sequence, read N- to C-terminus: Chromosomal replication initiator protein DnaA (443 aa).

Residues 1–73 (MYGDYRQIWE…YDAASKVTNR (73 aa)) form a domain I, interacts with DnaA modulators region. The interval 73-106 (RFIEIKILSEDEEEYREIKESIERENSSESTLLS) is domain II. The interval 107–323 (TLNPKYTFDT…GALIRIVAFA (217 aa)) is domain III, AAA+ region. Residues G151, G153, K154, and T155 each coordinate ATP. Residues 324–443 (TLTKSNIDLE…EELKKRIKGY (120 aa)) form a domain IV, binds dsDNA region.

This sequence belongs to the DnaA family. Oligomerizes as a right-handed, spiral filament on DNA at oriC.

The protein resides in the cytoplasm. Plays an essential role in the initiation and regulation of chromosomal replication. ATP-DnaA binds to the origin of replication (oriC) to initiate formation of the DNA replication initiation complex once per cell cycle. Binds the DnaA box (a 9 base pair repeat at the origin) and separates the double-stranded (ds)DNA. Forms a right-handed helical filament on oriC DNA; dsDNA binds to the exterior of the filament while single-stranded (ss)DNA is stabiized in the filament's interior. The ATP-DnaA-oriC complex binds and stabilizes one strand of the AT-rich DNA unwinding element (DUE), permitting loading of DNA polymerase. After initiation quickly degrades to an ADP-DnaA complex that is not apt for DNA replication. Binds acidic phospholipids. This is Chromosomal replication initiator protein DnaA from Caldanaerobacter subterraneus subsp. tengcongensis (strain DSM 15242 / JCM 11007 / NBRC 100824 / MB4) (Thermoanaerobacter tengcongensis).